The primary structure comprises 136 residues: Putative pre-16S rRNA nuclease (136 aa).

The protein belongs to the YqgF nuclease family.

It localises to the cytoplasm. Functionally, could be a nuclease involved in processing of the 5'-end of pre-16S rRNA. The polypeptide is Putative pre-16S rRNA nuclease (Francisella philomiragia subsp. philomiragia (strain ATCC 25017 / CCUG 19701 / FSC 153 / O#319-036)).